Reading from the N-terminus, the 298-residue chain is MTTHRPLFYGSITALITPMDNHGEVDFNALKKLVEYHIASGTHAIVSVGTTGESATLSIAENVKTILKTLEFADGRIPVIAGTGANATSEAITMTKLLNDSGVAGCLSVVPYYNKPTQEGMYQHFKAIAECTDIPQILYNVPSRTGSDLLPETVGRLAQISNIIGIKEATGDVSRVAKIKQAAGDDFIFLSGDDATGLESMKLGGQGVISVTNNIAAADMAKMCELALAGKFDEAEIINDKLSALHKDLFIESNPIPVKWAAYKLGLIPEPILRLPLTTLSEQSQPKVIEALKNAGLL.

Threonine 51 lines the pyruvate pocket. Catalysis depends on tyrosine 139, which acts as the Proton donor/acceptor. Lysine 167 (schiff-base intermediate with substrate) is an active-site residue. Isoleucine 209 serves as a coordination point for pyruvate.

The protein belongs to the DapA family. In terms of assembly, homotetramer; dimer of dimers.

Its subcellular location is the cytoplasm. The enzyme catalyses L-aspartate 4-semialdehyde + pyruvate = (2S,4S)-4-hydroxy-2,3,4,5-tetrahydrodipicolinate + H2O + H(+). It functions in the pathway amino-acid biosynthesis; L-lysine biosynthesis via DAP pathway; (S)-tetrahydrodipicolinate from L-aspartate: step 3/4. In terms of biological role, catalyzes the condensation of (S)-aspartate-beta-semialdehyde [(S)-ASA] and pyruvate to 4-hydroxy-tetrahydrodipicolinate (HTPA). The sequence is that of 4-hydroxy-tetrahydrodipicolinate synthase from Histophilus somni (strain 2336) (Haemophilus somnus).